The primary structure comprises 269 residues: Zinc transporter ZupT (269 aa).

Transmembrane regions (helical) follow at residues 5 to 25 (VLLAFGLTLFAGLATGVGSLI), 38 to 58 (SLALGFSAGVMIYVSLVEIFV), 75 to 95 (WMTIAGFFGGMLFIALIDKFI), 125 to 145 (MGIFTALAIGIHNFPEGIATF), 158 to 178 (IAIAVAIHNIPEGIAVSVPIF), 190 to 210 (LSFLSGLAEPVGALVAFLLLM), 212 to 232 (FLTDVMFGIIFAGVAGIMVFI), and 249 to 269 (LSMYGLVGGMAVMAISLVLLV). Fe(2+)-binding residues include N137 and E140. 2 residues coordinate Zn(2+): E140 and H165. Residues N166, E169, and E198 each coordinate Fe(2+). E169 lines the Zn(2+) pocket.

Belongs to the ZIP transporter (TC 2.A.5) family. ZupT subfamily.

It is found in the cell membrane. It carries out the reaction Zn(2+)(in) = Zn(2+)(out). In terms of biological role, mediates zinc uptake. May also transport other divalent cations. The polypeptide is Zinc transporter ZupT (Lysinibacillus sphaericus (strain C3-41)).